The chain runs to 418 residues: Tektin-1 (418 aa).

Coiled coils occupy residues 21–107, 134–177, 266–308, and 333–384; these read KNQY…TLKE, HELI…DLKD, NGLK…DQEG, and AQYR…NTIY.

Belongs to the tektin family. In terms of assembly, microtubule inner protein component of sperm flagellar doublet microtubules. Post-translationally, ubiquitinated, leading to its degradation. Deubiquitinated by USP16, promoting its stability. Predominantly expressed in testis. Expressed in airway epithelial cells.

The protein resides in the cytoplasm. It localises to the cytoskeleton. Its subcellular location is the cilium axoneme. It is found in the flagellum axoneme. Its function is as follows. Microtubule inner protein (MIP) part of the dynein-decorated doublet microtubules (DMTs) in cilia and flagellar axoneme. Forms filamentous polymers in the walls of ciliary and flagellar microtubules. The protein is Tektin-1 (TEKT1) of Homo sapiens (Human).